Here is a 312-residue protein sequence, read N- to C-terminus: Nicotinamide adenine dinucleotide transporter 1, chloroplastic (312 aa).

3 Solcar repeats span residues 11 to 103, 111 to 199, and 211 to 299; these read KNVL…LKSF, LSVG…IKVY, and LNAR…VHRF. The next 6 membrane-spanning stretches (helical) occupy residues 17 to 37, 78 to 98, 117 to 137, 171 to 191, 216 to 232, and 271 to 293; these read AAAG…LDVI, GLSP…TMYD, VLAA…LWVV, GLYS…IQFP, VAVA…TLTY, and FYRG…FTSF.

Belongs to the mitochondrial carrier (TC 2.A.29) family. As to expression, highly expressed in young leaf mesophyll cells, root tips and at the branches of adventitious roots. Low expression in all flower tissues and not detected in siliques and seeds.

It is found in the plastid. Its subcellular location is the chloroplast membrane. With respect to regulation, inhibited by pyridoxal 5'-phosphate, bathophenanthroline, tannic acid, mersalyl, mercuric chloride, p-hydroxymercuribenzoate, p-hydroxymercuribenzoate sulfonate, bromocresol purple and N-ethylmaleimide. Mediates the NAD(+) import into chloroplast. Favors the NAD(+)(in)/ADP or AMP(out) antiport exchange, but is also able to catalyze a low unidirectional transport (uniport) of NAD(+). Transports NAD(+), nicotinic acid adenine dinucleotide, nicotinamide mononucleotide, nicotinic acid mononucleotide, FAD, FMN, TTP, TDP, TMP, UTP, UDP, UMP, CTP, CDP, CMP, GTP, GDP, GMP, 3'-AMP, ATP, ADP, and AMP, has low transport activity with cAMP, pyrophosphate, NADH and alpha-NAD(+), and has no activity with NADP(+), NADPH, nicotinamide, nicotinic acid, adenosine, thiamine mono- or diphosphate, inorganic phosphate, CoA, folate, NaCl, malate, malonate, citrate, fumarate, aspartate, glutamate, S-adenosylmethionine, lysine, arginine, and ornithine. The polypeptide is Nicotinamide adenine dinucleotide transporter 1, chloroplastic (NDT1) (Arabidopsis thaliana (Mouse-ear cress)).